The following is a 1439-amino-acid chain: DNA-directed RNA polymerase subunit beta' (1439 aa).

Zn(2+) contacts are provided by cysteine 70, cysteine 72, cysteine 85, and cysteine 88. Mg(2+) is bound by residues aspartate 504, aspartate 506, and aspartate 508. Residues cysteine 862, cysteine 936, cysteine 943, and cysteine 946 each coordinate Zn(2+).

It belongs to the RNA polymerase beta' chain family. The RNAP catalytic core consists of 2 alpha, 1 beta, 1 beta' and 1 omega subunit. When a sigma factor is associated with the core the holoenzyme is formed, which can initiate transcription. It depends on Mg(2+) as a cofactor. Zn(2+) is required as a cofactor.

It carries out the reaction RNA(n) + a ribonucleoside 5'-triphosphate = RNA(n+1) + diphosphate. In terms of biological role, DNA-dependent RNA polymerase catalyzes the transcription of DNA into RNA using the four ribonucleoside triphosphates as substrates. The polypeptide is DNA-directed RNA polymerase subunit beta' (Gluconobacter oxydans (strain 621H) (Gluconobacter suboxydans)).